The chain runs to 427 residues: Peptidase B (427 aa).

Residues lysine 195 and aspartate 200 each coordinate Mn(2+). Lysine 207 is an active-site residue. Residues aspartate 218, aspartate 277, and glutamate 279 each contribute to the Mn(2+) site. Arginine 281 is a catalytic residue.

This sequence belongs to the peptidase M17 family. As to quaternary structure, homohexamer. Mn(2+) serves as cofactor.

It localises to the cytoplasm. It carries out the reaction Release of an N-terminal amino acid, Xaa, from a peptide or arylamide. Xaa is preferably Glu or Asp but may be other amino acids, including Leu, Met, His, Cys and Gln.. In terms of biological role, probably plays an important role in intracellular peptide degradation. This Escherichia coli O157:H7 protein is Peptidase B.